Consider the following 380-residue polypeptide: Cytochrome b (380 aa).

4 helical membrane-spanning segments follow: residues 34–54 (FGSL…LLAM), 78–99 (WLIR…FLHI), 114–134 (WNTG…GYVL), and 179–199 (FFAL…IHLT). Heme b-binding residues include histidine 84 and histidine 98. Histidine 183 and histidine 197 together coordinate heme b. Histidine 202 contacts a ubiquinone. Helical transmembrane passes span 227-247 (IKDI…ALFS), 289-309 (LGGV…PFLH), 321-341 (LSQT…WIGS), and 348-368 (FIII…ILFP).

It belongs to the cytochrome b family. As to quaternary structure, the cytochrome bc1 complex contains 11 subunits: 3 respiratory subunits (MT-CYB, CYC1 and UQCRFS1), 2 core proteins (UQCRC1 and UQCRC2) and 6 low-molecular weight proteins (UQCRH/QCR6, UQCRB/QCR7, UQCRQ/QCR8, UQCR10/QCR9, UQCR11/QCR10 and a cleavage product of UQCRFS1). This cytochrome bc1 complex then forms a dimer. Heme b serves as cofactor.

The protein resides in the mitochondrion inner membrane. Component of the ubiquinol-cytochrome c reductase complex (complex III or cytochrome b-c1 complex) that is part of the mitochondrial respiratory chain. The b-c1 complex mediates electron transfer from ubiquinol to cytochrome c. Contributes to the generation of a proton gradient across the mitochondrial membrane that is then used for ATP synthesis. This Alectoris rufa (Red-legged partridge) protein is Cytochrome b (MT-CYB).